The sequence spans 217 residues: Small ribosomal subunit protein uS3c (217 aa).

The KH type-2 domain occupies 39–109 (IRNFLRTKLI…RFRITITYIP (71 aa)).

This sequence belongs to the universal ribosomal protein uS3 family. In terms of assembly, part of the 30S ribosomal subunit.

It is found in the plastid. It localises to the chloroplast. The sequence is that of Small ribosomal subunit protein uS3c (rps3) from Chlorokybus atmophyticus (Soil alga).